The following is a 71-amino-acid chain: Exodeoxyribonuclease 7 small subunit (71 aa).

The protein belongs to the XseB family. In terms of assembly, heterooligomer composed of large and small subunits.

Its subcellular location is the cytoplasm. The catalysed reaction is Exonucleolytic cleavage in either 5'- to 3'- or 3'- to 5'-direction to yield nucleoside 5'-phosphates.. In terms of biological role, bidirectionally degrades single-stranded DNA into large acid-insoluble oligonucleotides, which are then degraded further into small acid-soluble oligonucleotides. The chain is Exodeoxyribonuclease 7 small subunit from Clostridium botulinum (strain Loch Maree / Type A3).